Here is a 414-residue protein sequence, read N- to C-terminus: Isocitrate dehydrogenase [NADP] cytoplasmic (414 aa).

Ser2 is modified (N-acetylserine). Tyr42 is modified (phosphotyrosine). NADP(+) is bound at residue 75–77 (TIT). Thr77 provides a ligand contact to substrate. Lys81 is modified (N6-acetyllysine). Residue Arg82 coordinates NADP(+). Residues 94–100 (SPNGTIR) and Arg109 contribute to the substrate site. Lys126 carries the post-translational modification N6-succinyllysine. Arg132 and Lys212 together coordinate substrate. An N6-acetyllysine mark is found at Lys224, Lys233, and Lys243. Asp252 is a Mn(2+) binding site. Lys260 is an NADP(+) binding site. 2 residues coordinate Mn(2+): Asp275 and Asp279. 310–315 (GTVTRH) lines the NADP(+) pocket. Lys321 is subject to N6-acetyllysine. Asn328 is a binding site for NADP(+). A Phosphoserine modification is found at Ser389. Lys400 carries the post-translational modification N6-succinyllysine.

It belongs to the isocitrate and isopropylmalate dehydrogenases family. As to quaternary structure, homodimer. Mg(2+) is required as a cofactor. The cofactor is Mn(2+). In terms of processing, acetylation at Lys-374 dramatically reduces catalytic activity.

The protein resides in the cytoplasm. Its subcellular location is the cytosol. It is found in the peroxisome. It carries out the reaction D-threo-isocitrate + NADP(+) = 2-oxoglutarate + CO2 + NADPH. Functionally, catalyzes the NADP(+)-dependent oxidative decarboxylation of isocitrate (D-threo-isocitrate) to 2-ketoglutarate (2-oxoglutarate), which is required by other enzymes such as the phytanoyl-CoA dioxygenase. Plays a critical role in the generation of NADPH, an important cofactor in many biosynthesis pathways. May act as a corneal epithelial crystallin and may be involved in maintaining corneal epithelial transparency. The protein is Isocitrate dehydrogenase [NADP] cytoplasmic (IDH1) of Homo sapiens (Human).